Here is a 684-residue protein sequence, read N- to C-terminus: Gabija protein GajB (684 aa).

The UvrD-like helicase ATP-binding domain occupies 14–351 (EQKSINAIFN…IEVINKIRND (338 aa)). 35 to 42 (SGAGAGKT) is an ATP binding site.

The protein belongs to the helicase family. Homodimer. Interacts with GajA; 2 GajB dimers dock at opposite sides of the GajA complex to form a 4:4 GajA-GajB assembly (GajAB). GajAB interacts with Bacillus phage Phi3T Gad1 protein; this interaction forms a 4:4:8 GajAB-Gad1 complex and leads to GajAB inhibition.

Functionally, component of antiviral defense system Gabija type II, composed of GajA and GajB. Expression of Gabija type II in B.subtilis (strain BEST7003) confers resistance to phages phi105, and SpBeta. May be a helicase or contribute to GajA activation. In Bacillus cereus (strain HuB5-5), this protein is Gabija protein GajB.